A 463-amino-acid polypeptide reads, in one-letter code: Toxin CaTX-A (463 aa).

Positions Met1–Ala18 are cleaved as a signal peptide.

It belongs to the jellyfish toxin family. Type II subfamily. Oligomer. Post-translationally, contains disulfide bonds. It is suggested that CaTX-B is synthesized in the tentacle, is modified (become CaTX-A) and then migrates to the nematocyst.

The protein resides in the secreted. The protein localises to the nematocyst. It is found in the target cell membrane. Has potent hemolytic activity. Is lethal to crayfish. Causes cutaneous inflammation in humans. May act as a pore-forming toxin, disrupting normal transmembrane ion concentration gradients in susceptible cells. This is Toxin CaTX-A from Carybdea alata (Hawaiian box jellyfish).